We begin with the raw amino-acid sequence, 430 residues long: Enolase (430 aa).

Gln-163 provides a ligand contact to (2R)-2-phosphoglycerate. The active-site Proton donor is Glu-205. Mg(2+) is bound by residues Asp-242, Glu-287, and Asp-314. Positions 339, 368, 369, and 390 each coordinate (2R)-2-phosphoglycerate. Catalysis depends on Lys-339, which acts as the Proton acceptor.

The protein belongs to the enolase family. Mg(2+) serves as cofactor.

It localises to the cytoplasm. Its subcellular location is the secreted. The protein localises to the cell surface. The catalysed reaction is (2R)-2-phosphoglycerate = phosphoenolpyruvate + H2O. Its pathway is carbohydrate degradation; glycolysis; pyruvate from D-glyceraldehyde 3-phosphate: step 4/5. Functionally, catalyzes the reversible conversion of 2-phosphoglycerate (2-PG) into phosphoenolpyruvate (PEP). It is essential for the degradation of carbohydrates via glycolysis. The sequence is that of Enolase from Exiguobacterium sibiricum (strain DSM 17290 / CCUG 55495 / CIP 109462 / JCM 13490 / 255-15).